A 576-amino-acid polypeptide reads, in one-letter code: MDPGAGSDSSLTVNEQVIVMSGHETIRVLEVGVDAQLPAEEESKGLESVAAGGSQSGGPVEASGPAEAGSCDPDHSAEATVAARSPSESCPSDCHLQPSPEPASGITDPDAAGCTSCPPGQVAGQQGLAVWTIPTATVAALPGLTAASPTGGTFKPPLAGLQAAAVLNTALPTPVQAAPPIQASSPAQPRPPAQPQPLFQTQPLLQTTPAILPQPTAATVAAPTPKTVDATPQITVQPAGFAFSPGIISAASLGGQTQILGSLTTAPVITNTIPSMPGISSQILTNAQGQVIGALPWVVNSASVATPAPAQSLQVQAVTPQLLLNAQGQVIATLASSPLPQPVAVRKPNTPESPAKSEVQPIQPTQAVPQPAVILTSPTPALKPSAATPIPITCSETPTVSQLVSKPHTPSLDEDGINLEEIREFAKNFKIRRLSLGLTQTQVGQALTATEGPAYSQSAICRFEKLDITPKSAQKLKPVLEKWLMEAELRNQEGQQNLMEFVGGEPSKKRKRRTSFTPQAIEALNAYFEKNPLPTGQEITEIAKELNYDREVVRVWFCNRRQTLKNTSKLNVFQIP.

Residues 65–88 (PAEAGSCDPDHSAEATVAARSPSE) are disordered. Positions 414–488 (EDGINLEEIR…VLEKWLMEAE (75 aa)) constitute a POU-specific domain. The homeobox DNA-binding region spans 509-568 (KRKRRTSFTPQAIEALNAYFEKNPLPTGQEITEIAKELNYDREVVRVWFCNRRQTLKNTS).

The protein belongs to the POU transcription factor family. Class-6 subfamily. Isoform C1 and isoform C2 are found in the brain, while isoform C7 is found in the testis.

It is found in the nucleus. Functionally, transcription factor that binds preferentially to a variant of the octamer motif (5'-ATGATAAT-3'). The chain is POU domain, class 6, transcription factor 1 (Pou6f1) from Mus musculus (Mouse).